The following is a 329-amino-acid chain: Phospho-N-acetylmuramoyl-pentapeptide-transferase (329 aa).

A run of 9 helical transmembrane segments spans residues 1–21 (MLLN…IGIP), 53–73 (MGGF…ALVF), 76–96 (FSPA…IGFL), 109–129 (GLTA…SYFI), 141–161 (ILSW…IWLV), 175–195 (GLAS…AVVH), 198–218 (YDVL…FVFN), 237–257 (FLAI…IGAV), and 309–329 (IVFW…YFAF).

The protein belongs to the glycosyltransferase 4 family. MraY subfamily. The cofactor is Mg(2+).

The protein resides in the cell membrane. It carries out the reaction UDP-N-acetyl-alpha-D-muramoyl-L-alanyl-gamma-D-glutamyl-L-lysyl-D-alanyl-D-alanine + di-trans,octa-cis-undecaprenyl phosphate = Mur2Ac(oyl-L-Ala-gamma-D-Glu-L-Lys-D-Ala-D-Ala)-di-trans,octa-cis-undecaprenyl diphosphate + UMP. Its pathway is cell wall biogenesis; peptidoglycan biosynthesis. Catalyzes the initial step of the lipid cycle reactions in the biosynthesis of the cell wall peptidoglycan: transfers peptidoglycan precursor phospho-MurNAc-pentapeptide from UDP-MurNAc-pentapeptide onto the lipid carrier undecaprenyl phosphate, yielding undecaprenyl-pyrophosphoryl-MurNAc-pentapeptide, known as lipid I. The polypeptide is Phospho-N-acetylmuramoyl-pentapeptide-transferase (Lactococcus lactis subsp. cremoris (strain MG1363)).